A 1252-amino-acid chain; its full sequence is LRR receptor-like serine/threonine-protein kinase GSO2 (1252 aa).

An N-terminal signal peptide occupies residues 1–22 (MQQNSVLLALFFLCFSSGLGSG). Residues 23 to 876 (QPGQRDDLQT…QRSLSPKTVV (854 aa)) lie on the Extracellular side of the membrane. Asn62, Asn77, and Asn117 each carry an N-linked (GlcNAc...) asparagine glycan. 10 LRR repeats span residues 94–118 (FNNL…LSNL), 120–143 (SSLE…LGSL), 144–166 (VNLK…TFGN), 168–190 (VNLQ…RFGR), 191–215 (LVQL…IGNC), 217–239 (SLAL…LNRL), 240–263 (KNLQ…LGDL), 265–286 (SIQY…RLTE), 287–310 (LANL…EFWR), and 312–335 (NQLE…ICSN). N-linked (GlcNAc...) asparagine glycosylation is present at Asn157. N-linked (GlcNAc...) asparagine glycosylation is found at Asn214 and Asn229. Asn299 carries N-linked (GlcNAc...) asparagine glycosylation. Residue Asn336 is glycosylated (N-linked (GlcNAc...) asparagine). 21 LRR repeats span residues 337–360 (TSLK…ISNC), 361–384 (QSLK…LFQL), 386–408 (ELTN…ISNL), 409–433 (TNLQ…GFLG), 435–456 (LEIM…IGNC), 457–480 (TRLQ…IGRL), 481–504 (KDLT…LGNC), 506–528 (QMTV…FGFL), 529–552 (TALE…LINL), 554–575 (NLTR…LCGS), 577–599 (SYLS…LGKS), 600–622 (TNLD…TFGK), 623–648 (ISEL…GLCK), 650–670 (LTHI…WLGK), 671–695 (LPLL…IFSL), 697–719 (NILT…IGNL), 720–743 (QALN…IGKL), 745–767 (KLFE…IGQL), 768–792 (QDLQ…ISTL), 793–816 (PKLE…IGDM), and 818–839 (SLGY…QFSR). N-linked (GlcNAc...) asparagine glycans are attached at residues Asn370, Asn394, and Asn407. N-linked (GlcNAc...) asparagine glycosylation is present at Asn455. Residues Asn538, Asn554, Asn559, and Asn566 are each glycosylated (N-linked (GlcNAc...) asparagine). Asn709 carries N-linked (GlcNAc...) asparagine glycosylation. Residue Asn780 is glycosylated (N-linked (GlcNAc...) asparagine). N-linked (GlcNAc...) asparagine glycosylation is present at Asn823. The helical transmembrane segment at 877–897 (IISAISSLAAIALMVLVIILF) threads the bilayer. The Cytoplasmic portion of the chain corresponds to 898 to 1252 (FKQNHDLFKK…YREMQTDTDK (355 aa)). The residue at position 945 (Thr945) is a Phosphothreonine. Residues 948-1232 (LNEEFMIGSG…PSSRQASEYL (285 aa)) enclose the Protein kinase domain. ATP-binding positions include 954–962 (IGSGGSGKV) and Lys976. Phosphotyrosine occurs at positions 1024 and 1066. The active-site Proton acceptor is the Asp1079. Ser1114 is subject to Phosphoserine. 2 positions are modified to phosphotyrosine: Tyr1124 and Tyr1131.

It belongs to the protein kinase superfamily. Ser/Thr protein kinase family. In terms of assembly, interacts with CIF1 and CIF2. Mostly expressed in siliques, seeds, developing embryos and seedlings, detected in flower buds, but not in roots, leaves or stems.

The protein localises to the cell membrane. The enzyme catalyses L-seryl-[protein] + ATP = O-phospho-L-seryl-[protein] + ADP + H(+). The catalysed reaction is L-threonyl-[protein] + ATP = O-phospho-L-threonyl-[protein] + ADP + H(+). Functionally, together with GSO1, receptor-like serine/threonine-kinase required during the development of the epidermal surface in embryos and cotyledons. Involved in the nuclear division phase of megagametogenesis. In coordination with GSO2, regulates root growth through control of cell division and cell fate specification. Controls seedling root growth by modulating sucrose response after germination. Receptor of the peptide hormones CIF1 and CIF2 required for contiguous Casparian strip diffusion barrier formation in roots. This chain is LRR receptor-like serine/threonine-protein kinase GSO2, found in Arabidopsis thaliana (Mouse-ear cress).